We begin with the raw amino-acid sequence, 427 residues long: Putative F-box protein At4g10740 (427 aa).

An F-box domain is found at arginine 2 to methionine 47.

In Arabidopsis thaliana (Mouse-ear cress), this protein is Putative F-box protein At4g10740.